Reading from the N-terminus, the 1155-residue chain is DNA-directed RNA polymerase subunit beta (1155 aa).

It belongs to the RNA polymerase beta chain family. In terms of assembly, the RNAP catalytic core consists of 2 alpha, 1 beta, 1 beta' and 1 omega subunit. When a sigma factor is associated with the core the holoenzyme is formed, which can initiate transcription.

The enzyme catalyses RNA(n) + a ribonucleoside 5'-triphosphate = RNA(n+1) + diphosphate. Functionally, DNA-dependent RNA polymerase catalyzes the transcription of DNA into RNA using the four ribonucleoside triphosphates as substrates. In Borreliella burgdorferi (strain ZS7) (Borrelia burgdorferi), this protein is DNA-directed RNA polymerase subunit beta.